We begin with the raw amino-acid sequence, 53 residues long: UPF0391 membrane protein gsr2640 (53 aa).

The next 2 helical transmembrane spans lie at 4 to 24 and 32 to 49; these read LLWL…GGVV and WFLI…FVTG.

The protein belongs to the UPF0391 family.

The protein localises to the cell membrane. The chain is UPF0391 membrane protein gsr2640 from Gloeobacter violaceus (strain ATCC 29082 / PCC 7421).